A 523-amino-acid chain; its full sequence is Calcium-dependent protein kinase 1 (523 aa).

Residues 1-36 (MGCNQSKSANDVRGNKVNHVNSKKKNNKREDTNDGE) form a disordered region. Gly-2 carries N-myristoyl glycine lipidation. Residue Cys-3 is the site of S-palmitoyl cysteine attachment. Residues 57–324 (YFKVRKLGSG…AEEALNSRWI (268 aa)) form the Protein kinase domain. ATP contacts are provided by residues 63-71 (LGSGAYGEV), Lys-86, and Lys-90. Residue Ser-65 is modified to Phosphoserine. Position 117 is a phosphoserine (Ser-117). The active-site Proton acceptor is the Asp-190. Phosphoserine is present on residues Ser-216 and Ser-219. Thr-230 carries the post-translational modification Phosphothreonine. Ser-334 bears the Phosphoserine mark. The J domain autoinhibitory motif motif lies at 345–352 (NMRKFEGS). The j domain stretch occupies residues 345–363 (NMRKFEGSQKLAQAAILFI). The short motif at 353 to 363 (QKLAQAAILFI) is the J domain interacts with the EF-hand domains element. EF-hand domains follow at residues 371–406 (EERK…LRNF), 415–450 (NVEE…KQIL), 451–486 (FSEE…TSIS), and 487–520 (EKTW…ICDH). Ca(2+) is bound by residues Asp-384, Asn-386, Asp-388, Gln-390, Glu-395, Asp-428, Asp-430, Asn-432, Tyr-434, Glu-439, Asp-464, Asp-466, Ser-468, Lys-470, Glu-475, Asp-498, Asn-500, Asp-502, Met-504, and Glu-509.

The protein belongs to the protein kinase superfamily. Ser/Thr protein kinase family. CDPK subfamily. Monomer. Mg(2+) serves as cofactor. In terms of processing, myristoylated. Myristoylation and palmitoylation are required for the localization to the parasitophorous vacuole membrane. Post-translationally, palmitoylated. Palmitoylation increases in merozoites in response to low level of extracellular K(+) in the host blood. Myristoylation and palmitoylation are required for the localization to the parasitophorous vacuole membrane. Phosphorylation at Thr-230 may regulate CDPK1 kinase activity. Phosphorylation increases in response to an increase in intracellular Ca(2+) levels. Autophosphorylated in vitro. Autophosphorylation does not affect membrane localization in vitro.

It is found in the membrane. The protein resides in the cell membrane. Its subcellular location is the parasitophorous vacuole membrane. It localises to the cytoplasm. The protein localises to the cell projection. It is found in the cilium. The protein resides in the flagellum. Its subcellular location is the host cell membrane. It carries out the reaction L-seryl-[protein] + ATP = O-phospho-L-seryl-[protein] + ADP + H(+). It catalyses the reaction L-threonyl-[protein] + ATP = O-phospho-L-threonyl-[protein] + ADP + H(+). With respect to regulation, activated by calcium. Upon calcium binding to the EF-hand domains, the C-terminus of the junction domain (J domain) undergoes a conformational change which results in the dissociation of the pseudo-substrate inhibitory motif from the catalytic domain. This, in turn may facilitate the autophosphorylation of the activation loop at Thr-230, which leads to the kinase activation. Functionally, calcium-dependent protein kinase which acts as a sensor and effector of intracellular Ca(2+) levels probably in part downstream of cGMP-activated PKG kinase. During the liver stage, involved in sporozoite motility and thus in sporozoite invasion of host hepatocytes, probably together with CDPK4 and CDPK5. In the mosquito midgut and during the last stage of male gamete exflagellation, may play a role in the rupture of the host erythrocyte membrane. In the mosquito midgut, required for the differentiation of the zygote into the ookinete by promoting the translational activation of a subset of repressed mRNAs; these mRNAs are kept repressed in the zygote by the DOZI- or CITH-containing mRNP complexes. Dispensable during the asexual blood stage. The polypeptide is Calcium-dependent protein kinase 1 (Plasmodium berghei (strain Anka)).